Reading from the N-terminus, the 181-residue chain is Shikimate kinase 2 (181 aa).

12–17 is an ATP binding site; that stretch reads GCGKTT. Residues Thr-16 and Asp-32 each contribute to the Mg(2+) site. Substrate contacts are provided by Asp-34, Arg-58, and Gly-79. An LID domain region spans residues 112–126; it reads EAEPEVGLRPTLTGK. Arg-120 serves as a coordination point for ATP. Residue Arg-139 coordinates substrate.

This sequence belongs to the shikimate kinase family. AroL subfamily. As to quaternary structure, monomer. Mg(2+) is required as a cofactor.

Its subcellular location is the cytoplasm. The enzyme catalyses shikimate + ATP = 3-phosphoshikimate + ADP + H(+). It functions in the pathway metabolic intermediate biosynthesis; chorismate biosynthesis; chorismate from D-erythrose 4-phosphate and phosphoenolpyruvate: step 5/7. In terms of biological role, catalyzes the specific phosphorylation of the 3-hydroxyl group of shikimic acid using ATP as a cosubstrate. In Escherichia fergusonii (strain ATCC 35469 / DSM 13698 / CCUG 18766 / IAM 14443 / JCM 21226 / LMG 7866 / NBRC 102419 / NCTC 12128 / CDC 0568-73), this protein is Shikimate kinase 2.